The following is a 105-amino-acid chain: Met repressor (105 aa).

The protein belongs to the MetJ family. As to quaternary structure, homodimer.

Its subcellular location is the cytoplasm. Its function is as follows. This regulatory protein, when combined with SAM (S-adenosylmethionine) represses the expression of the methionine regulon and of enzymes involved in SAM synthesis. The polypeptide is Met repressor (Glaesserella parasuis serovar 5 (strain SH0165) (Haemophilus parasuis)).